Consider the following 66-residue polypeptide: Large ribosomal subunit protein uL29 (66 aa).

This sequence belongs to the universal ribosomal protein uL29 family.

This Brucella abortus (strain S19) protein is Large ribosomal subunit protein uL29.